The primary structure comprises 411 residues: 2,3-bisphosphoglycerate-independent phosphoglycerate mutase (411 aa).

This sequence belongs to the BPG-independent phosphoglycerate mutase family. A-PGAM subfamily.

The enzyme catalyses (2R)-2-phosphoglycerate = (2R)-3-phosphoglycerate. Its pathway is carbohydrate degradation; glycolysis; pyruvate from D-glyceraldehyde 3-phosphate: step 3/5. Catalyzes the interconversion of 2-phosphoglycerate and 3-phosphoglycerate. In Pyrobaculum calidifontis (strain DSM 21063 / JCM 11548 / VA1), this protein is 2,3-bisphosphoglycerate-independent phosphoglycerate mutase.